The sequence spans 443 residues: ATP-dependent protease ATPase subunit HslU (443 aa).

Residues Ile18 and 60–65 (GVGKTE) contribute to the ATP site. The tract at residues 138 to 158 (PAENQWGEKEQNEDKGTRQTF) is disordered. Over residues 143–154 (WGEKEQNEDKGT) the composition is skewed to basic and acidic residues. The ATP site is built by Asp255, Glu321, and Arg393.

The protein belongs to the ClpX chaperone family. HslU subfamily. As to quaternary structure, a double ring-shaped homohexamer of HslV is capped on each side by a ring-shaped HslU homohexamer. The assembly of the HslU/HslV complex is dependent on binding of ATP.

The protein localises to the cytoplasm. In terms of biological role, ATPase subunit of a proteasome-like degradation complex; this subunit has chaperone activity. The binding of ATP and its subsequent hydrolysis by HslU are essential for unfolding of protein substrates subsequently hydrolyzed by HslV. HslU recognizes the N-terminal part of its protein substrates and unfolds these before they are guided to HslV for hydrolysis. The polypeptide is ATP-dependent protease ATPase subunit HslU (Pseudoalteromonas atlantica (strain T6c / ATCC BAA-1087)).